The primary structure comprises 316 residues: MARKKYALIGAGNIGGTLAHLAALKGLGDIVLFDVVEGVPQGKALDLSQCGPVEGFDANIKGSNDYADIAGADVIIVTAGVARKPGMSRDDLLGINLKVMKAVGEGIRDNAPDAFVICITNPLDAMVWALREFSGLPANKVVGMAGVLDSGRFSHFLAEEFGVSVNSVLGGHGDNMVPVLEYSTVSGIPVSELIEMGFSTKEKVDEIIKRTRGGGGEIVALLKTGSAYYAPATSGIAMAEAYLYDQKRILPAAAHLSGEYGIDNLYVGVPVVIGANGVEKVVEVKLSDEAKANLQVSVDAVKELLVACKGIDESLA.

34-39 (DVVEGV) contributes to the NAD(+) binding site. Substrate is bound by residues Arg-89, Asn-121, and Arg-152. Asn-121 lines the NAD(+) pocket. The Proton acceptor role is filled by His-172.

It belongs to the LDH/MDH superfamily. LDH family. In terms of assembly, homotetramer.

The enzyme catalyses (S)-lactate + NAD(+) = pyruvate + NADH + H(+). It participates in fermentation; pyruvate fermentation to lactate; (S)-lactate from pyruvate: step 1/1. The sequence is that of L-lactate dehydrogenase from Botryococcus braunii (Green alga).